Reading from the N-terminus, the 294-residue chain is MAILVRPRLLAALAPTFLGCLLLQVIAGAGIPEKAFNLTWISTDFKTILEWQPKPTNYTYTVQISDRSRNWKNKCFSTTDTECDLTDEIVKDVTWAYEAKVLSVPRRNSVHGDGDQLVIHGEEPPFTNAPKFLPYRDTNLGQPVIQQFEQDGRKLNVVVKDSLTLVRKNGTFLTLRQVFGKDLGYIITYRKGSSTGKKTNITNTNEFSIDVEEGVSYCFFVQAMIFSRKTNQNSPGSSTVCTEQWKSFLGETLIIVGAVVLLATIFIILLSISLCKRRKNRAGQKGKNTPSRLA.

Residues Met-1–Gly-28 form the signal peptide. Residues Ala-29–Glu-251 are Extracellular-facing. 2 N-linked (GlcNAc...) asparagine glycosylation sites follow: Asn-37 and Asn-57. The cysteines at positions 75 and 83 are disulfide-linked. 2 N-linked (GlcNAc...) asparagine glycosylation sites follow: Asn-169 and Asn-200. Cys-218 and Cys-241 are oxidised to a cystine. Positions Trp-245–Ser-247 match the WKS motif motif. The chain crosses the membrane as a helical span at residues Thr-252–Leu-274. Cys-275 carries the S-palmitoyl cysteine lipid modification. Residues Cys-275–Ala-294 are Cytoplasmic-facing.

The protein belongs to the tissue factor family. Interacts with HSPE; the interaction, inhibited by heparin, promotes the generation of activated factor X and activates coagulation in the presence of activated factor VII.

Its subcellular location is the membrane. Initiates blood coagulation by forming a complex with circulating factor VII or VIIa. The [TF:VIIa] complex activates factors IX or X by specific limited proteolysis. TF plays a role in normal hemostasis by initiating the cell-surface assembly and propagation of the coagulation protease cascade. This Mus musculus (Mouse) protein is Tissue factor (F3).